The following is a 351-amino-acid chain: Hydroxymethylglutaryl-CoA synthase (351 aa).

Glu-80 serves as the catalytic Proton donor/acceptor. Cys-112 (acyl-thioester intermediate) is an active-site residue. Positions 112 and 153 each coordinate (3S)-3-hydroxy-3-methylglutaryl-CoA. A CoA-binding site is contributed by Arg-199. (3S)-3-hydroxy-3-methylglutaryl-CoA is bound by residues Thr-201 and His-234. His-234 acts as the Proton donor/acceptor in catalysis. A CoA-binding site is contributed by Lys-239. Residues Arg-243, Asn-266, and Ser-296 each coordinate (3S)-3-hydroxy-3-methylglutaryl-CoA.

This sequence belongs to the thiolase-like superfamily. Archaeal HMG-CoA synthase family. Interacts with acetoacetyl-CoA thiolase that catalyzes the precedent step in the pathway and with a DUF35 protein. The acetoacetyl-CoA thiolase/HMG-CoA synthase complex channels the intermediate via a fused CoA-binding site, which allows for efficient coupling of the endergonic thiolase reaction with the exergonic HMGCS reaction.

It catalyses the reaction acetoacetyl-CoA + acetyl-CoA + H2O = (3S)-3-hydroxy-3-methylglutaryl-CoA + CoA + H(+). The protein operates within metabolic intermediate biosynthesis; (R)-mevalonate biosynthesis; (R)-mevalonate from acetyl-CoA: step 2/3. Catalyzes the condensation of acetyl-CoA with acetoacetyl-CoA to form 3-hydroxy-3-methylglutaryl-CoA (HMG-CoA). Functions in the mevalonate (MVA) pathway leading to isopentenyl diphosphate (IPP), a key precursor for the biosynthesis of isoprenoid compounds that are building blocks of archaeal membrane lipids. This is Hydroxymethylglutaryl-CoA synthase from Thermoplasma volcanium (strain ATCC 51530 / DSM 4299 / JCM 9571 / NBRC 15438 / GSS1).